A 709-amino-acid polypeptide reads, in one-letter code: Peptidoglycan D,D-transpeptidase FtsI homolog (709 aa).

Residues 20-42 (LQGIYYAFLSISTMIKIALDPYS) traverse the membrane as a helical segment. Catalysis depends on Ser341, which acts as the Acyl-ester intermediate.

It belongs to the transpeptidase family.

The protein localises to the plastid. The protein resides in the chloroplast membrane. It carries out the reaction Preferential cleavage: (Ac)2-L-Lys-D-Ala-|-D-Ala. Also transpeptidation of peptidyl-alanyl moieties that are N-acyl substituents of D-alanine.. The polypeptide is Peptidoglycan D,D-transpeptidase FtsI homolog (ftsI) (Nephroselmis olivacea (Green alga)).